The chain runs to 182 residues: Large ribosomal subunit protein uL16 (182 aa).

The protein belongs to the universal ribosomal protein uL16 family.

This chain is Large ribosomal subunit protein uL16, found in Pyrobaculum islandicum (strain DSM 4184 / JCM 9189 / GEO3).